The following is a 376-amino-acid chain: MHFSDTHIGYRSLTLDEREQDFYDAFHEAIDIALENSVDFVIHTGDLFDTWVPGNRAIREFRNAVMKLNARNIPIFVIFGDHDRPRRNGEPAAGIFDFMGVHVLGWDAYEYAVRKFDGEDVLIGGISNMKGYMKTRLKDEYKRSENIEEGYRNRILMSHQAIDPFFVPDQCEAKMDDLPMNFSYIAMGHLHDFMERRIGPLISYAGSTEIKSENEINGYLKQGKGVNIVDISNGEVDLQRIRLKSVRPQIRVESDADNYVHEISEKLSSLRVKDNEKKPLVGLEIHGDISMETVMQDISKFDNAIFSRPKIRKDPKIPNIHTETADLREYFRAYLGDERLADLAMKIMAHSRSKDIDGIMKEIEVLYGDNRQDSPD.

Mn(2+) contacts are provided by Asp-5, His-7, Asp-46, and Asp-81. Residue His-82 is the Proton donor of the active site. Residues His-159, His-189, and His-191 each contribute to the Mn(2+) site.

This sequence belongs to the MRE11/RAD32 family. Homodimer. Forms a heterotetramer composed of two Mre11 subunits and two Rad50 subunits. Requires Mn(2+) as cofactor.

Its activity is regulated as follows. Nuclease activity is regulated by Rad50. Its function is as follows. Part of the Rad50/Mre11 complex, which is involved in the early steps of DNA double-strand break (DSB) repair. The complex may facilitate opening of the processed DNA ends to aid in the recruitment of HerA and NurA. Mre11 binds to DSB ends and has both double-stranded 3'-5' exonuclease activity and single-stranded endonuclease activity. The sequence is that of DNA double-strand break repair protein Mre11 from Thermoplasma acidophilum (strain ATCC 25905 / DSM 1728 / JCM 9062 / NBRC 15155 / AMRC-C165).